Consider the following 507-residue polypeptide: 25-hydroxyvitamin D-1 alpha hydroxylase, mitochondrial (507 aa).

Cysteine 454 is a heme binding site.

This sequence belongs to the cytochrome P450 family. Heme is required as a cofactor. Kidney.

It is found in the mitochondrion membrane. The enzyme catalyses calcidiol + 2 reduced [adrenodoxin] + O2 + 2 H(+) = calcitriol + 2 oxidized [adrenodoxin] + H2O. It catalyses the reaction secalciferol + 2 reduced [adrenodoxin] + O2 + 2 H(+) = calcitetrol + 2 oxidized [adrenodoxin] + H2O. It carries out the reaction 25-hydroxy-24-oxocalciol + 2 reduced [adrenodoxin] + O2 + 2 H(+) = (1S)-1,25-dihydroxy-24-oxocalciol + 2 oxidized [adrenodoxin] + H2O. The catalysed reaction is 25-hydroxyvitamin D2 + 2 reduced [adrenodoxin] + O2 + 2 H(+) = 1alpha,25-dihydroxyvitamin D2 + 2 oxidized [adrenodoxin] + H2O. It participates in hormone biosynthesis; vitamin D biosynthesis. Its activity is regulated as follows. Activated by cardiolipin and dioleoyl phosphatidylethanolamine (DOPE), phospholipids found in the inner mitochondrial membrane. Inhibited by high substrate concentration. Functionally, a cytochrome P450 monooxygenase involved in vitamin D metabolism and in calcium and phosphorus homeostasis. Catalyzes the rate-limiting step in the activation of vitamin D in the kidney, namely the hydroxylation of 25-hydroxyvitamin D3/calcidiol at the C1-alpha position to form the hormonally active form of vitamin D3, 1alpha,25-dihydroxyvitamin D3/calcitriol that acts via the vitamin D receptor (VDR). Has 1-alpha-hydroxylase activity on vitamin D intermediates of the CYP24A1-mediated inactivation pathway. Converts 24R,25-dihydroxyvitamin D3/secalciferol to 1-alpha,24,25-trihydroxyvitamin D3, an active ligand of VDR. Also active on 25-hydroxyvitamin D2. Mechanistically, uses molecular oxygen inserting one oxygen atom into a substrate, and reducing the second into a water molecule, with two electrons provided by NADPH via FDXR/adrenodoxin reductase and FDX1/adrenodoxin. This Mus musculus (Mouse) protein is 25-hydroxyvitamin D-1 alpha hydroxylase, mitochondrial (Cyp27b1).